Consider the following 211-residue polypeptide: Protein-L-isoaspartate O-methyltransferase (211 aa).

Serine 62 is a catalytic residue.

It belongs to the methyltransferase superfamily. L-isoaspartyl/D-aspartyl protein methyltransferase family.

The protein localises to the cytoplasm. The catalysed reaction is [protein]-L-isoaspartate + S-adenosyl-L-methionine = [protein]-L-isoaspartate alpha-methyl ester + S-adenosyl-L-homocysteine. Its function is as follows. Catalyzes the methyl esterification of L-isoaspartyl residues in peptides and proteins that result from spontaneous decomposition of normal L-aspartyl and L-asparaginyl residues. It plays a role in the repair and/or degradation of damaged proteins. In Shewanella denitrificans (strain OS217 / ATCC BAA-1090 / DSM 15013), this protein is Protein-L-isoaspartate O-methyltransferase.